Here is a 202-residue protein sequence, read N- to C-terminus: Nucleoside triphosphate pyrophosphatase (202 aa).

Catalysis depends on D79, which acts as the Proton acceptor.

The protein belongs to the Maf family. A divalent metal cation is required as a cofactor.

It localises to the cytoplasm. It carries out the reaction a ribonucleoside 5'-triphosphate + H2O = a ribonucleoside 5'-phosphate + diphosphate + H(+). It catalyses the reaction a 2'-deoxyribonucleoside 5'-triphosphate + H2O = a 2'-deoxyribonucleoside 5'-phosphate + diphosphate + H(+). Nucleoside triphosphate pyrophosphatase. May have a dual role in cell division arrest and in preventing the incorporation of modified nucleotides into cellular nucleic acids. The protein is Nucleoside triphosphate pyrophosphatase of Bradyrhizobium diazoefficiens (strain JCM 10833 / BCRC 13528 / IAM 13628 / NBRC 14792 / USDA 110).